The following is a 66-amino-acid chain: Large ribosomal subunit protein bL35 (66 aa).

Basic residues predominate over residues 1-26; it reads MPKMKTHRGSAKRFKKTGSGKLKRSH. The disordered stretch occupies residues 1–48; that stretch reads MPKMKTHRGSAKRFKKTGSGKLKRSHAYTSHLFANKSQKQKRKLRKSA.

Belongs to the bacterial ribosomal protein bL35 family.

This Bacillus licheniformis (strain ATCC 14580 / DSM 13 / JCM 2505 / CCUG 7422 / NBRC 12200 / NCIMB 9375 / NCTC 10341 / NRRL NRS-1264 / Gibson 46) protein is Large ribosomal subunit protein bL35.